The following is a 361-amino-acid chain: Protein phosphatase 1 regulatory subunit 7 (361 aa).

The disordered stretch occupies residues Met-1–His-64. Ala-2 is modified (N-acetylalanine). Phosphoserine is present on residues Ser-12, Ser-24, Ser-27, Ser-45, and Ser-48. Positions Glu-17–Lys-34 are enriched in basic and acidic residues. Basic and acidic residues predominate over residues Ser-48–Glu-58. LRR repeat units follow at residues Asp-78–Lys-99, Lys-100–Gln-121, Ser-122–Thr-143, Glu-144–Thr-165, Gln-166–His-187, Gln-188–Thr-209, Asn-210–Thr-231, Asn-232–Val-253, Asn-254–Asn-275, Lys-276–Thr-297, and Glu-298–Lys-319. Ser-323 carries the phosphoserine modification. Positions Asn-332–Phe-361 constitute an LRRCT domain.

Belongs to the SDS22 family. As to quaternary structure, interacts with PPP1CA, PPP1CB and PPP1CC/PPP1G. As to expression, widely expressed with high level in testis. Expression increases during puberty. Expressed in spermatids and probably also in spermatozoa.

The protein resides in the nucleus. In terms of biological role, regulatory subunit of protein phosphatase 1. The protein is Protein phosphatase 1 regulatory subunit 7 (Ppp1r7) of Mus musculus (Mouse).